The primary structure comprises 120 residues: MSERPKTLPPTLRDKKRYIAFKVISENQFNKDEIKEAIWNACLRTLGELGTAKAKPWLIKFDETTQTGIIRCDRNHVYDVIFSLTLVSDINGNKAIIKVLGVSGTIKRLKRKFLSQFGWR.

This sequence belongs to the eukaryotic/archaeal RNase P protein component 2 family. Consists of a catalytic RNA component and at least 4-5 protein subunits. Forms a subcomplex with Rnp3 which stimulates the catalytic RNA.

It localises to the cytoplasm. It catalyses the reaction Endonucleolytic cleavage of RNA, removing 5'-extranucleotides from tRNA precursor.. Part of ribonuclease P, a protein complex that generates mature tRNA molecules by cleaving their 5'-ends. The RNA is catalytic, but its KM for pre-tRNA is 170-fold decreased in the presence of the 4 known protein subunits (Rnp1-4). The protein subunits also decrease the amount of Mg(2+) needed for activity. The protein is Ribonuclease P protein component 2 of Pyrococcus furiosus (strain ATCC 43587 / DSM 3638 / JCM 8422 / Vc1).